A 677-amino-acid polypeptide reads, in one-letter code: Threonine--tRNA ligase (677 aa).

One can recognise a TGS domain in the interval 1–59 (MAQATISITVNGEAKEVEATTTGVELFAEDKNIIAVKINGENRDLYTPLNDGDTVDPIA). Positions 255–561 (DHRKLGAEMD…LLEHYAGAFP (307 aa)) are catalytic. Positions 360, 411, and 538 each coordinate Zn(2+).

The protein belongs to the class-II aminoacyl-tRNA synthetase family. Homodimer. Requires Zn(2+) as cofactor.

It is found in the cytoplasm. The enzyme catalyses tRNA(Thr) + L-threonine + ATP = L-threonyl-tRNA(Thr) + AMP + diphosphate + H(+). Functionally, catalyzes the attachment of threonine to tRNA(Thr) in a two-step reaction: L-threonine is first activated by ATP to form Thr-AMP and then transferred to the acceptor end of tRNA(Thr). Also edits incorrectly charged L-seryl-tRNA(Thr). This is Threonine--tRNA ligase from Bifidobacterium longum (strain NCC 2705).